Reading from the N-terminus, the 217-residue chain is RING-H2 finger protein ATL40 (217 aa).

The chain crosses the membrane as a helical span at residues 28-48; it reads IFLVTTVSFSIIIIIVFVYYL. The RING-type; atypical zinc finger occupies 100–142; that stretch reads CAVCLSLLEEKDNARMLPNCKHVFHVSCVDTWLTTQSTCPVCR. 2 stretches are compositionally biased toward basic and acidic residues: residues 143 to 160 and 186 to 217; these read TEAEPSHPRLEPEPREGP and DSFRRILTRERSSNRRDHSRVDQDRELDIERQ. Residues 143–217 form a disordered region; sequence TEAEPSHPRL…QDRELDIERQ (75 aa).

Belongs to the RING-type zinc finger family. ATL subfamily.

It is found in the membrane. It catalyses the reaction S-ubiquitinyl-[E2 ubiquitin-conjugating enzyme]-L-cysteine + [acceptor protein]-L-lysine = [E2 ubiquitin-conjugating enzyme]-L-cysteine + N(6)-ubiquitinyl-[acceptor protein]-L-lysine.. Its pathway is protein modification; protein ubiquitination. The sequence is that of RING-H2 finger protein ATL40 (ATL40) from Arabidopsis thaliana (Mouse-ear cress).